Reading from the N-terminus, the 212-residue chain is 3,4-dihydroxy-2-butanone 4-phosphate synthase (212 aa).

D-ribulose 5-phosphate is bound by residues 37–38 (RE), Asp-42, 150–154 (RRGHT), and Glu-174. Residue Glu-38 coordinates Mg(2+). His-153 is a Mg(2+) binding site.

Belongs to the DHBP synthase family. Homodimer. Mg(2+) is required as a cofactor. The cofactor is Mn(2+).

The catalysed reaction is D-ribulose 5-phosphate = (2S)-2-hydroxy-3-oxobutyl phosphate + formate + H(+). It participates in cofactor biosynthesis; riboflavin biosynthesis; 2-hydroxy-3-oxobutyl phosphate from D-ribulose 5-phosphate: step 1/1. Functionally, catalyzes the conversion of D-ribulose 5-phosphate to formate and 3,4-dihydroxy-2-butanone 4-phosphate. The polypeptide is 3,4-dihydroxy-2-butanone 4-phosphate synthase (Shewanella pealeana (strain ATCC 700345 / ANG-SQ1)).